A 403-amino-acid chain; its full sequence is Cytochrome P450 monooxygenase ustC (403 aa).

An N-terminal signal peptide occupies residues 1–18 (MSPFIFAVTLTFAILALG). 2 N-linked (GlcNAc...) asparagine glycosylation sites follow: Asn-52 and Asn-92. Position 318 (Cys-318) interacts with heme.

Belongs to the cytochrome P450 family. Heme serves as cofactor.

It participates in mycotoxin biosynthesis. Its function is as follows. Cytochrome P450 monooxygenase; part of the gene cluster that mediates the biosynthesis of the secondary metabolite ustiloxin B, an antimitotic tetrapeptide. First, ustA is processed by the subtilisin-like endoprotease Kex2 that is outside the ustiloxin B gene cluster, at the C-terminal side of Arg-Lys, after transfer to Golgi apparatus through the endoplasmic reticulum (ER). Cleavage by KEX2 generates 16 peptides YAIG-I to YAIG-XVI. To process the precursor peptide further, at least two peptidases are necessary to cleave the N-terminal and C-terminal sides of the Tyr-Ala-Ile-Gly core peptide which serves as backbone for the synthesis of ustiloxin B, through cyclization and modification of the tyrosine with a non-protein coding amino acid, norvaline. One of the two peptidases must be the serine peptidase ustP; and the other pepdidase is probably ustH. Macrocyclization of the core peptide derived from ustA requires the tyrosinase ustQ, as well as the homologous oxidases ustYa and ustYb, and leads to the production of the first cyclization product N-desmethylustiloxin F. For the formation of N-desmethylustiloxin F, three oxidation steps are required, hydroxylation at the benzylic position, hydroxylation at either the aromatic ring of Tyr or beta-position of Ile, and oxidative cyclization. UstQ may catalyze the oxidation of a phenol moiety, whereas the ustYa and ustYb are most likely responsible for the remaining two-step oxidations. N-desmethylustiloxin F is then methylated by ustM to yield ustiloxin F which in turn substrate of the cytochrome P450 monooxygenase ustC which catalyzes the formation of S-deoxyustiloxin H. The flavoprotein monooxygenases ustF1 and ustF2 then participate in the modification of the side chain of S-deoxyustiloxin H, leading to the synthesis of an oxime intermediate, via ustiloxin H. Finally, carboxylative dehydration performed by the cysteine desulfurase-like protein ustD yields ustiloxin B. This chain is Cytochrome P450 monooxygenase ustC, found in Aspergillus flavus (strain ATCC 200026 / FGSC A1120 / IAM 13836 / NRRL 3357 / JCM 12722 / SRRC 167).